An 83-amino-acid polypeptide reads, in one-letter code: MSFFDYFRSKKNSTASVAKERLQIIVAHERGQREQPDYLPQLQQELLQVIRKYVQISDDMVQVEVDRNDHCSVLELNVTLPEK.

This sequence belongs to the MinE family.

Functionally, prevents the cell division inhibition by proteins MinC and MinD at internal division sites while permitting inhibition at polar sites. This ensures cell division at the proper site by restricting the formation of a division septum at the midpoint of the long axis of the cell. This is Cell division topological specificity factor from Marinobacter nauticus (strain ATCC 700491 / DSM 11845 / VT8) (Marinobacter aquaeolei).